The primary structure comprises 710 residues: Methionine--tRNA ligase (710 aa).

The 'HIGH' region signature appears at 26–36 (PYANGQIHIGH). Zn(2+) contacts are provided by Cys-157, Cys-160, Cys-170, and Cys-173. A 'KMSKS' region motif is present at residues 347–351 (KMSKS). Lys-350 lines the ATP pocket. The tRNA-binding domain maps to 604–710 (DFAKIDLRIA…SGAKPGMRVK (107 aa)).

Belongs to the class-I aminoacyl-tRNA synthetase family. MetG type 1 subfamily. Homodimer. Requires Zn(2+) as cofactor.

The protein localises to the cytoplasm. The enzyme catalyses tRNA(Met) + L-methionine + ATP = L-methionyl-tRNA(Met) + AMP + diphosphate. Functionally, is required not only for elongation of protein synthesis but also for the initiation of all mRNA translation through initiator tRNA(fMet) aminoacylation. This is Methionine--tRNA ligase from Paraburkholderia xenovorans (strain LB400).